The primary structure comprises 308 residues: Homoserine kinase (308 aa).

85-95 (PLTRGLGSSAA) contributes to the ATP binding site.

It belongs to the GHMP kinase family. Homoserine kinase subfamily.

Its subcellular location is the cytoplasm. The catalysed reaction is L-homoserine + ATP = O-phospho-L-homoserine + ADP + H(+). The protein operates within amino-acid biosynthesis; L-threonine biosynthesis; L-threonine from L-aspartate: step 4/5. Functionally, catalyzes the ATP-dependent phosphorylation of L-homoserine to L-homoserine phosphate. The protein is Homoserine kinase of Caldicellulosiruptor saccharolyticus (strain ATCC 43494 / DSM 8903 / Tp8T 6331).